Reading from the N-terminus, the 305-residue chain is Probable lipid kinase YegS-like (305 aa).

The DAGKc domain maps to 1-129 (MSERKALLIL…IDLGEVGGQI (129 aa)). ATP is bound by residues threonine 39, 65–71 (GDGTLRD), and threonine 92. Leucine 210, aspartate 213, and leucine 215 together coordinate Mg(2+). Glutamate 268 (proton acceptor) is an active-site residue.

Belongs to the diacylglycerol/lipid kinase family. YegS lipid kinase subfamily. Requires Mg(2+) as cofactor. The cofactor is Ca(2+).

It is found in the cytoplasm. Probably phosphorylates lipids; the in vivo substrate is unknown. The polypeptide is Probable lipid kinase YegS-like (Pseudomonas fluorescens (strain Pf0-1)).